A 452-amino-acid chain; its full sequence is Phosphoglucosamine mutase (452 aa).

Serine 97 serves as the catalytic Phosphoserine intermediate. Residues serine 97, aspartate 236, aspartate 238, and aspartate 240 each coordinate Mg(2+). Serine 97 carries the post-translational modification Phosphoserine.

It belongs to the phosphohexose mutase family. Mg(2+) serves as cofactor. Activated by phosphorylation.

The enzyme catalyses alpha-D-glucosamine 1-phosphate = D-glucosamine 6-phosphate. In terms of biological role, catalyzes the conversion of glucosamine-6-phosphate to glucosamine-1-phosphate. The sequence is that of Phosphoglucosamine mutase from Prochlorococcus marinus (strain MIT 9515).